Reading from the N-terminus, the 177-residue chain is ATP-dependent protease subunit HslV (177 aa).

Thr-6 is an active-site residue. Ser-161, Cys-164, and Thr-167 together coordinate Na(+).

It belongs to the peptidase T1B family. HslV subfamily. In terms of assembly, a double ring-shaped homohexamer of HslV is capped on each side by a ring-shaped HslU homohexamer. The assembly of the HslU/HslV complex is dependent on binding of ATP.

It is found in the cytoplasm. It catalyses the reaction ATP-dependent cleavage of peptide bonds with broad specificity.. With respect to regulation, allosterically activated by HslU binding. In terms of biological role, protease subunit of a proteasome-like degradation complex believed to be a general protein degrading machinery. The chain is ATP-dependent protease subunit HslV from Thermodesulfovibrio yellowstonii (strain ATCC 51303 / DSM 11347 / YP87).